Consider the following 439-residue polypeptide: General transcription factor IIE subunit 1 (439 aa).

Position 2 is an N-acetylalanine (A2). Residues 14 to 104 (LKRLAKYVIR…NYRTLVNVVK (91 aa)) enclose the HTH TFE/IIEalpha-type domain. N6-acetyllysine is present on K67. Zn(2+)-binding residues include C129, C132, C154, and C157. A C4-type zinc finger spans residues 129–157 (CPVCSSTFTDLEANQLFDPMTGTFRCTFC). S268 is subject to Phosphoserine. Residues 333–344 (SSAMAGSVGAAA) show a composition bias toward low complexity. The interval 333-392 (SSAMAGSVGAAAPVTTANGSDSESETSESDDDSPPRPAAVAVHKREEDEEEDDEFEEVAD) is disordered. Composition is skewed to acidic residues over residues 354–364 (SESETSESDDD) and 379–392 (EDEE…EVAD).

It belongs to the TFIIE alpha subunit family. Tetramer of two alpha and two beta chains. Interacts with TAF6/TAFII80. Interacts with ATF7IP. Interacts with SND1. Part of TBP-based Pol II pre-initiation complex (PIC), in which Pol II core assembles with general transcription factors and other specific initiation factors including GTF2E1, GTF2E2, GTF2F1, GTF2F2, TCEA1, ERCC2, ERCC3, GTF2H2, GTF2H3, GTF2H4, GTF2H5, GTF2A1, GTF2A2, GTF2B and TBP; this large multi-subunit PIC complex mediates DNA unwinding and targets Pol II core to the transcription start site where the first phosphodiester bond forms.

The protein resides in the nucleus. Its function is as follows. Recruits TFIIH to the initiation complex and stimulates the RNA polymerase II C-terminal domain kinase and DNA-dependent ATPase activities of TFIIH. Both TFIIH and TFIIE are required for promoter clearance by RNA polymerase. The chain is General transcription factor IIE subunit 1 (GTF2E1) from Pongo abelii (Sumatran orangutan).